Consider the following 430-residue polypeptide: Glutamate-1-semialdehyde 2,1-aminomutase (430 aa).

Lys-265 is modified (N6-(pyridoxal phosphate)lysine).

It belongs to the class-III pyridoxal-phosphate-dependent aminotransferase family. HemL subfamily. As to quaternary structure, homodimer. Pyridoxal 5'-phosphate is required as a cofactor.

The protein localises to the cytoplasm. The catalysed reaction is (S)-4-amino-5-oxopentanoate = 5-aminolevulinate. Its pathway is porphyrin-containing compound metabolism; protoporphyrin-IX biosynthesis; 5-aminolevulinate from L-glutamyl-tRNA(Glu): step 2/2. In Helicobacter pylori (strain ATCC 700392 / 26695) (Campylobacter pylori), this protein is Glutamate-1-semialdehyde 2,1-aminomutase (hemL).